We begin with the raw amino-acid sequence, 83 residues long: Kappa-actitoxin-Aer3a (83 aa).

Positions 1–22 (MKGQMIICLVLIALCMSVVVMA) are cleaved as a signal peptide. Positions 23–49 (QNLRAEELEKANPKDERVRSFERNQKR) are excised as a propeptide. Positions 51 to 83 (CKDYLPKSECTQFRCRTSMKYKYTNCKKTCGTC) constitute a ShKT domain. 3 cysteine pairs are disulfide-bonded: Cys51–Cys83, Cys60–Cys76, and Cys65–Cys80.

This sequence belongs to the sea anemone type 1 potassium channel toxin family. Type 1a subfamily.

It localises to the secreted. It is found in the nematocyst. Specifically, dose-dependently and potently blocks the voltage-gated potassium channel Kv1.1/KCNA1 (Ki=1.6 pM). Moderately blocks potassium channel heterotetramers formed by 3 subunits of Kv1.1/KCNA1 and 1 subunit of Kv1.2/KCNA2 (Ki=56 nM) and weakly blocks those formed by 2 subunits of Kv1.1/KCNA1 and 2 subunits of Kv1.2/KCNA2 (Ki=14 nM). The polypeptide is Kappa-actitoxin-Aer3a (Anemonia erythraea (Sea anemone)).